A 101-amino-acid polypeptide reads, in one-letter code: NADH-quinone oxidoreductase subunit K (101 aa).

The next 3 membrane-spanning stretches (helical) occupy residues 4–24 (LAHY…GIFL), 30–50 (IIIL…FVAF), and 61–81 (IFVF…LAIL).

Belongs to the complex I subunit 4L family. In terms of assembly, NDH-1 is composed of 14 different subunits. Subunits NuoA, H, J, K, L, M, N constitute the membrane sector of the complex.

The protein localises to the cell inner membrane. The enzyme catalyses a quinone + NADH + 5 H(+)(in) = a quinol + NAD(+) + 4 H(+)(out). Functionally, NDH-1 shuttles electrons from NADH, via FMN and iron-sulfur (Fe-S) centers, to quinones in the respiratory chain. The immediate electron acceptor for the enzyme in this species is believed to be ubiquinone. Couples the redox reaction to proton translocation (for every two electrons transferred, four hydrogen ions are translocated across the cytoplasmic membrane), and thus conserves the redox energy in a proton gradient. The chain is NADH-quinone oxidoreductase subunit K from Paraburkholderia xenovorans (strain LB400).